Consider the following 185-residue polypeptide: Ribosome-recycling factor (185 aa).

A disordered region spans residues 127 to 158 (AVRNTRQDANNKVKKLEKDKEISEDESKKAQE).

It belongs to the RRF family.

It is found in the cytoplasm. Its function is as follows. Responsible for the release of ribosomes from messenger RNA at the termination of protein biosynthesis. May increase the efficiency of translation by recycling ribosomes from one round of translation to another. In Helicobacter pylori (strain G27), this protein is Ribosome-recycling factor.